The sequence spans 121 residues: Small ribosomal subunit protein uS13 (121 aa).

The interval 99-121 (RGQRTRTNSRTRKGPRRKIMKKK) is disordered. Residues 101 to 121 (QRTRTNSRTRKGPRRKIMKKK) are compositionally biased toward basic residues.

It belongs to the universal ribosomal protein uS13 family. In terms of assembly, part of the 30S ribosomal subunit. Forms a loose heterodimer with protein S19. Forms two bridges to the 50S subunit in the 70S ribosome.

Its function is as follows. Located at the top of the head of the 30S subunit, it contacts several helices of the 16S rRNA. In the 70S ribosome it contacts the 23S rRNA (bridge B1a) and protein L5 of the 50S subunit (bridge B1b), connecting the 2 subunits; these bridges are implicated in subunit movement. Contacts the tRNAs in the A and P-sites. This is Small ribosomal subunit protein uS13 from Thermodesulfovibrio yellowstonii (strain ATCC 51303 / DSM 11347 / YP87).